The following is an 80-amino-acid chain: Pigment-dispersing hormone peptides (80 aa).

A signal peptide spans 1–20; it reads MANYITIAIIVGIVCGQALS. A propeptide spanning residues 21 to 58 is cleaved from the precursor; the sequence is VEDVDRNLLELNLPYGRGLDSELQLARLMLAAPRFCHP. Alanine 78 is modified (alanine amide).

The protein belongs to the arthropod PDH family. Expressed in the brain (at protein level).

The protein localises to the secreted. Neuropeptide PDF is the main transmitter regulating circadian locomotor rhythms. The polypeptide is Pigment-dispersing hormone peptides (Camponotus floridanus (Florida carpenter ant)).